Here is a 390-residue protein sequence, read N- to C-terminus: Copper-containing nitrite reductase (390 aa).

Residues 1-18 form the signal peptide; the sequence is MKRQALAAMIASLFALAA. Cysteine 19 is lipidated: N-palmitoyl cysteine. Residue cysteine 19 is the site of S-diacylglycerol cysteine attachment. The tract at residues 30–51 is disordered; the sequence is ETPAAAAEAASSAAQTAAETPS. Plastocyanin-like domains follow at residues 101-195 and 245-346; these read WTFD…ILVE and GHVG…LKVE. Cu cation contacts are provided by histidine 134, histidine 139, histidine 174, cysteine 175, histidine 183, and methionine 188. Histidine 139 is a substrate binding site. Histidine 280 is a binding site for substrate. A Cu cation-binding site is contributed by histidine 329. The disordered stretch occupies residues 367 to 390; the sequence is GAAPAASAPAASAPAASASEKSVY. Residues 368–390 are compositionally biased toward low complexity; sequence AAPAASAPAASAPAASASEKSVY. 3 tandem repeats follow at residues 371–375, 376–380, and 381–385. Residues 371-385 form a 3 X 5 AA tandem repeats of A-A-S-A-P region; it reads AASAPAASAPAASAS.

The protein belongs to the multicopper oxidase family. Homotrimer. The cofactor is Cu(+). Cu(2+) serves as cofactor.

The protein resides in the cell outer membrane. It catalyses the reaction nitric oxide + Fe(III)-[cytochrome c] + H2O = Fe(II)-[cytochrome c] + nitrite + 2 H(+). Its function is as follows. Catalyzes the reduction of nitrite to nitric oxide (NO). It could be essential for growth and survival in oxygen-depleted environments. This Neisseria meningitidis serogroup B (strain ATCC BAA-335 / MC58) protein is Copper-containing nitrite reductase (aniA).